A 395-amino-acid polypeptide reads, in one-letter code: NAD(P)H-quinone oxidoreductase subunit H (395 aa).

Belongs to the complex I 49 kDa subunit family. NDH-1 can be composed of about 15 different subunits; different subcomplexes with different compositions have been identified which probably have different functions.

Its subcellular location is the cellular thylakoid membrane. The catalysed reaction is a plastoquinone + NADH + (n+1) H(+)(in) = a plastoquinol + NAD(+) + n H(+)(out). It carries out the reaction a plastoquinone + NADPH + (n+1) H(+)(in) = a plastoquinol + NADP(+) + n H(+)(out). Functionally, NDH-1 shuttles electrons from an unknown electron donor, via FMN and iron-sulfur (Fe-S) centers, to quinones in the respiratory and/or the photosynthetic chain. The immediate electron acceptor for the enzyme in this species is believed to be plastoquinone. Couples the redox reaction to proton translocation, and thus conserves the redox energy in a proton gradient. Cyanobacterial NDH-1 also plays a role in inorganic carbon-concentration. The sequence is that of NAD(P)H-quinone oxidoreductase subunit H from Prochlorococcus marinus (strain MIT 9301).